The sequence spans 132 residues: T-cell receptor alpha chain V region 2B4 (132 aa).

The first 20 residues, M1–S20, serve as a signal peptide directing secretion. The segment at Q21–L113 is v segment. The N-linked (GlcNAc...) asparagine glycan is linked to N42. Positions Y114–S117 are d segment. The segment at G118–K132 is j segment.

This chain is T-cell receptor alpha chain V region 2B4, found in Mus musculus (Mouse).